We begin with the raw amino-acid sequence, 253 residues long: Imidazole glycerol phosphate synthase subunit HisF (253 aa).

Active-site residues include D11 and D130.

This sequence belongs to the HisA/HisF family. In terms of assembly, heterodimer of HisH and HisF.

The protein resides in the cytoplasm. The enzyme catalyses 5-[(5-phospho-1-deoxy-D-ribulos-1-ylimino)methylamino]-1-(5-phospho-beta-D-ribosyl)imidazole-4-carboxamide + L-glutamine = D-erythro-1-(imidazol-4-yl)glycerol 3-phosphate + 5-amino-1-(5-phospho-beta-D-ribosyl)imidazole-4-carboxamide + L-glutamate + H(+). The protein operates within amino-acid biosynthesis; L-histidine biosynthesis; L-histidine from 5-phospho-alpha-D-ribose 1-diphosphate: step 5/9. In terms of biological role, IGPS catalyzes the conversion of PRFAR and glutamine to IGP, AICAR and glutamate. The HisF subunit catalyzes the cyclization activity that produces IGP and AICAR from PRFAR using the ammonia provided by the HisH subunit. The polypeptide is Imidazole glycerol phosphate synthase subunit HisF (Cereibacter sphaeroides (strain ATCC 17025 / ATH 2.4.3) (Rhodobacter sphaeroides)).